Consider the following 92-residue polypeptide: Small ribosomal subunit protein uS19 (92 aa).

This sequence belongs to the universal ribosomal protein uS19 family.

Protein S19 forms a complex with S13 that binds strongly to the 16S ribosomal RNA. The polypeptide is Small ribosomal subunit protein uS19 (Rickettsia akari (strain Hartford)).